A 381-amino-acid chain; its full sequence is MGIKNLATLISEQVPNAIKSRDIKYFHGRKVAIDASMSLYQFLIAVRQQDGVQLAGEDGETTSHLMGMFYRTLRMIDHGIKPCYVFDGSPPELKKYELDKRKVRREDTEAKLKEATEQAEIIKHERRLVKVLPWHNEEAQKLLSLMGIPYVVAPAEAEAQCAELAKSGKVFAAASEDMDTLCYQTPVLLRHLTFSEARKLPIQEFDTDVIYNTLDLTQTQFIDLGIILGCDYCEGIKGVGPVNALKLIKEHGSLEAIVEKFENGDISSGRWKIPEGWQFKEARDLFMQPDVIPSEEVTLKWEEPKAEELIEFMVKEKGFNEDRIKSGIERLRKGLKVGVQKRLDSFFKIQPKTKEELATAAKKAKDAKKKAAAKGKIAKRR.

The interval 1–105 (MGIKNLATLI…YELDKRKVRR (105 aa)) is N-domain. Aspartate 34 provides a ligand contact to Mg(2+). The DNA site is built by arginine 47 and arginine 71. Aspartate 87, glutamate 156, glutamate 158, aspartate 177, and aspartate 179 together coordinate Mg(2+). The I-domain stretch occupies residues 120 to 251 (EIIKHERRLV…VNALKLIKEH (132 aa)). DNA is bound at residue glutamate 156. Residues glycine 229 and aspartate 231 each coordinate DNA. Aspartate 231 provides a ligand contact to Mg(2+). An interaction with PCNA region spans residues 339–347 (VQKRLDSFF). A disordered region spans residues 360–381 (AAKKAKDAKKKAAAKGKIAKRR). A compositionally biased stretch (basic residues) spans 365 to 381 (KDAKKKAAAKGKIAKRR).

This sequence belongs to the XPG/RAD2 endonuclease family. FEN1 subfamily. As to quaternary structure, interacts with PCNA. Three molecules of FEN1 bind to one PCNA trimer with each molecule binding to one PCNA monomer. PCNA stimulates the nuclease activity without altering cleavage specificity. It depends on Mg(2+) as a cofactor. Post-translationally, phosphorylated. Phosphorylation upon DNA damage induces relocalization to the nuclear plasma.

It localises to the nucleus. The protein localises to the nucleolus. Its subcellular location is the nucleoplasm. The protein resides in the mitochondrion. Functionally, structure-specific nuclease with 5'-flap endonuclease and 5'-3' exonuclease activities involved in DNA replication and repair. During DNA replication, cleaves the 5'-overhanging flap structure that is generated by displacement synthesis when DNA polymerase encounters the 5'-end of a downstream Okazaki fragment. It enters the flap from the 5'-end and then tracks to cleave the flap base, leaving a nick for ligation. Also involved in the long patch base excision repair (LP-BER) pathway, by cleaving within the apurinic/apyrimidinic (AP) site-terminated flap. Acts as a genome stabilization factor that prevents flaps from equilibrating into structures that lead to duplications and deletions. Also possesses 5'-3' exonuclease activity on nicked or gapped double-stranded DNA, and exhibits RNase H activity. Also involved in replication and repair of rDNA and in repairing mitochondrial DNA. This Kluyveromyces lactis (strain ATCC 8585 / CBS 2359 / DSM 70799 / NBRC 1267 / NRRL Y-1140 / WM37) (Yeast) protein is Flap endonuclease 1.